Consider the following 502-residue polypeptide: Mannitol dehydrogenase 2 (502 aa).

This sequence belongs to the mannitol dehydrogenase family.

The catalysed reaction is D-mannitol + NAD(+) = D-fructose + NADH + H(+). Functionally, catalyzes the NAD(H)-dependent interconversion of D-fructose and D-mannitol in the mannitol metabolic pathway. This chain is Mannitol dehydrogenase 2, found in Saccharomyces cerevisiae (strain ATCC 204508 / S288c) (Baker's yeast).